The primary structure comprises 56 residues: Large ribosomal subunit protein bL32 (56 aa).

The segment covering 1 to 19 (MAVPKRKKSRSTTRHRRAQ) has biased composition (basic residues). The tract at residues 1–22 (MAVPKRKKSRSTTRHRRAQWKT) is disordered.

Belongs to the bacterial ribosomal protein bL32 family.

The sequence is that of Large ribosomal subunit protein bL32 from Cutibacterium acnes (strain DSM 16379 / KPA171202) (Propionibacterium acnes).